Consider the following 136-residue polypeptide: Ergosterol biosynthetic protein 28 (136 aa).

A run of 4 helical transmembrane segments spans residues 18–34, 56–72, 79–95, and 109–125; these read VVVSVAALFNTVQSFLT, FGIWTLLSAIVRFYCAY, VYFLCQCTYYLACFHFL, and GLLSPIVVSTVSIWFMA.

Belongs to the ERG28 family. In terms of assembly, heterotetramer of erg25, erg26, erg27 and erg28. Erg28 acts as a scaffold to tether erg27 and other 4,4-demethylation-related enzymes, forming a demethylation enzyme complex, in the endoplasmic reticulum.

Its subcellular location is the endoplasmic reticulum membrane. It functions in the pathway steroid metabolism; ergosterol biosynthesis. Its function is as follows. Part of the third module of ergosterol biosynthesis pathway that includes by the late steps of the pathway. Erg28 has a role as a scaffold to help anchor the catalytic components of the C-4 demethylation complex erg25, erg26 and erg27 to the endoplasmic reticulum. The third module or late pathway involves the ergosterol synthesis itself through consecutive reactions that mainly occur in the endoplasmic reticulum (ER) membrane. Firstly, the squalene synthase erg9 catalyzes the condensation of 2 farnesyl pyrophosphate moieties to form squalene, which is the precursor of all steroids. Secondly, squalene is converted into lanosterol by the consecutive action of the squalene epoxidase erg1 and the lanosterol synthase erg7. The lanosterol 14-alpha-demethylase erg11/cyp1 catalyzes C14-demethylation of lanosterol to produce 4,4'-dimethyl cholesta-8,14,24-triene-3-beta-ol. In the next steps, a complex process involving various demethylation, reduction and desaturation reactions catalyzed by the C-14 reductase erg24 and the C-4 demethylation complex erg25-erg26-erg27 leads to the production of zymosterol. Erg28 likely functions in the C-4 demethylation complex reaction by tethering erg26 and Erg27 to the endoplasmic reticulum or to facilitate interaction between these proteins. Then, the sterol 24-C-methyltransferase erg6 catalyzes the methyl transfer from S-adenosyl-methionine to the C-24 of zymosterol to form fecosterol. The C-8 sterol isomerase erg2 catalyzes the reaction which results in unsaturation at C-7 in the B ring of sterols and thus converts fecosterol to episterol. The sterol-C5-desaturases erg31 and erg32 then catalyze the introduction of a C-5 double bond in the B ring to produce 5-dehydroepisterol. The C-22 sterol desaturase erg5 further converts 5-dehydroepisterol into ergosta-5,7,22,24(28)-tetraen-3beta-ol by forming the C-22(23) double bond in the sterol side chain. Finally, ergosta-5,7,22,24(28)-tetraen-3beta-ol is substrate of the C-24(28) sterol reductase erg4 to produce ergosterol. In the genus Schizosaccharomyces, a second route exists between lanosterol and fecosterol, via the methylation of lanosterol to eburicol by erg6, followed by C14-demethylation by erg11/cyp1 and C4-demethylation by the demethylation complex erg25-erg26-erg27. Extends the chronological lifespan when overexpressed. This chain is Ergosterol biosynthetic protein 28, found in Schizosaccharomyces pombe (strain 972 / ATCC 24843) (Fission yeast).